Reading from the N-terminus, the 413-residue chain is Multifunctional CCA protein (413 aa).

Positions 8 and 11 each coordinate ATP. CTP-binding residues include Gly-8 and Arg-11. Residues Asp-21 and Asp-23 each contribute to the Mg(2+) site. Residues Arg-91, Arg-137, and Arg-140 each contribute to the ATP site. CTP contacts are provided by Arg-91, Arg-137, and Arg-140. The HD domain occupies 228 to 329 (TGIHTLMTLS…VKLFDSIDAW (102 aa)).

Belongs to the tRNA nucleotidyltransferase/poly(A) polymerase family. Bacterial CCA-adding enzyme type 1 subfamily. As to quaternary structure, monomer. Can also form homodimers and oligomers. It depends on Mg(2+) as a cofactor. Ni(2+) serves as cofactor.

The enzyme catalyses a tRNA precursor + 2 CTP + ATP = a tRNA with a 3' CCA end + 3 diphosphate. It carries out the reaction a tRNA with a 3' CCA end + 2 CTP + ATP = a tRNA with a 3' CCACCA end + 3 diphosphate. In terms of biological role, catalyzes the addition and repair of the essential 3'-terminal CCA sequence in tRNAs without using a nucleic acid template. Adds these three nucleotides in the order of C, C, and A to the tRNA nucleotide-73, using CTP and ATP as substrates and producing inorganic pyrophosphate. tRNA 3'-terminal CCA addition is required both for tRNA processing and repair. Also involved in tRNA surveillance by mediating tandem CCA addition to generate a CCACCA at the 3' terminus of unstable tRNAs. While stable tRNAs receive only 3'-terminal CCA, unstable tRNAs are marked with CCACCA and rapidly degraded. This Citrobacter koseri (strain ATCC BAA-895 / CDC 4225-83 / SGSC4696) protein is Multifunctional CCA protein.